We begin with the raw amino-acid sequence, 46 residues long: Photosystem II reaction center protein K (46 aa).

Residues 1–9 constitute a propeptide that is removed on maturation; sequence MTTLALVLA. A helical transmembrane segment spans residues 18–38; that stretch reads FAPIVDVLPVIPVFFILLAFV.

It belongs to the PsbK family. As to quaternary structure, PSII is composed of 1 copy each of membrane proteins PsbA, PsbB, PsbC, PsbD, PsbE, PsbF, PsbH, PsbI, PsbJ, PsbK, PsbL, PsbM, PsbT, PsbX, PsbY, PsbZ, Psb30/Ycf12, at least 3 peripheral proteins of the oxygen-evolving complex and a large number of cofactors. It forms dimeric complexes. This protein is tightly associated with CP43 (psbC), one of the core proteins.

The protein resides in the plastid. It localises to the chloroplast thylakoid membrane. Functionally, one of the components of the core complex of photosystem II (PSII). PSII is a light-driven water:plastoquinone oxidoreductase that uses light energy to abstract electrons from H(2)O, generating O(2) and a proton gradient subsequently used for ATP formation. It consists of a core antenna complex that captures photons, and an electron transfer chain that converts photonic excitation into a charge separation. Required for assembly and/or stability of PSII. In Chlamydomonas reinhardtii (Chlamydomonas smithii), this protein is Photosystem II reaction center protein K.